Reading from the N-terminus, the 197-residue chain is Putative early 21.8 kDa protein (197 aa).

Its function is as follows. This protein is required for viral late gene expression. The polypeptide is Putative early 21.8 kDa protein (DA26) (Orgyia pseudotsugata (Douglas-fir tussock moth)).